Consider the following 99-residue polypeptide: Integration host factor subunit alpha (99 aa).

Belongs to the bacterial histone-like protein family. Heterodimer of an alpha and a beta chain.

Functionally, this protein is one of the two subunits of integration host factor, a specific DNA-binding protein that functions in genetic recombination as well as in transcriptional and translational control. This is Integration host factor subunit alpha from Alteromonas mediterranea (strain DSM 17117 / CIP 110805 / LMG 28347 / Deep ecotype).